Reading from the N-terminus, the 1223-residue chain is ATP-dependent DNA helicase P143 (1223 aa).

Residues 692–701 carry the Nuclear localization signal motif; sequence RKCRCVQKIK. 919-926 lines the ATP pocket; it reads GVPLSGKS. The H-T-H motif DNA-binding region spans 967–981; the sequence is TINELKKCSESFFKK.

Its subcellular location is the host nucleus. The enzyme catalyses ATP + H2O = ADP + phosphate + H(+). Functionally, essential for the initiation of viral DNA replication, it may contribute to other functions such as controlling the switch to the late phase and leading to the inhibition of host protein synthesis. Required for late and very late gene expression. This chain is ATP-dependent DNA helicase P143 (P143), found in Orgyia pseudotsugata multicapsid polyhedrosis virus (OpMNPV).